A 318-amino-acid chain; its full sequence is Ribonuclease Z (318 aa).

Residues H63, H65, D67, H68, H142, D213, and H273 each coordinate Zn(2+). Catalysis depends on D67, which acts as the Proton acceptor.

The protein belongs to the RNase Z family. As to quaternary structure, homodimer. Requires Zn(2+) as cofactor.

It catalyses the reaction Endonucleolytic cleavage of RNA, removing extra 3' nucleotides from tRNA precursor, generating 3' termini of tRNAs. A 3'-hydroxy group is left at the tRNA terminus and a 5'-phosphoryl group is left at the trailer molecule.. In terms of biological role, zinc phosphodiesterase, which displays some tRNA 3'-processing endonuclease activity. Probably involved in tRNA maturation, by removing a 3'-trailer from precursor tRNA. The chain is Ribonuclease Z from Leuconostoc mesenteroides subsp. mesenteroides (strain ATCC 8293 / DSM 20343 / BCRC 11652 / CCM 1803 / JCM 6124 / NCDO 523 / NBRC 100496 / NCIMB 8023 / NCTC 12954 / NRRL B-1118 / 37Y).